Consider the following 141-residue polypeptide: Hemoglobin subunit alpha (141 aa).

The 141-residue stretch at 1-141 (VLSSKDKANI…VSTVLTSKYR (141 aa)) folds into the Globin domain. Position 3 is a phosphoserine (serine 3). Lysine 7 and lysine 11 each carry N6-succinyllysine. The residue at position 16 (lysine 16) is an N6-acetyllysine; alternate. Lysine 16 is modified (N6-succinyllysine; alternate). Tyrosine 24 is modified (phosphotyrosine). Position 40 is an N6-succinyllysine (lysine 40). Serine 49 is modified (phosphoserine). Histidine 58 contributes to the O2 binding site. Histidine 87 is a binding site for heme b. At serine 102 the chain carries Phosphoserine. Threonine 108 is modified (phosphothreonine). Serine 124 is subject to Phosphoserine. Residues threonine 134 and threonine 137 each carry the phosphothreonine modification. Position 138 is a phosphoserine (serine 138).

Belongs to the globin family. In terms of assembly, heterotetramer of two alpha chains and two beta chains. In terms of tissue distribution, red blood cells.

Functionally, involved in oxygen transport from the lung to the various peripheral tissues. Its function is as follows. Hemopressin acts as an antagonist peptide of the cannabinoid receptor CNR1. Hemopressin-binding efficiently blocks cannabinoid receptor CNR1 and subsequent signaling. The chain is Hemoglobin subunit alpha (HBA) from Lama glama (Llama).